A 391-amino-acid polypeptide reads, in one-letter code: Chalcone synthase 2 (391 aa).

C164 is an active-site residue.

Belongs to the thiolase-like superfamily. Chalcone/stilbene synthases family.

It carries out the reaction (E)-4-coumaroyl-CoA + 3 malonyl-CoA + 3 H(+) = 2',4,4',6'-tetrahydroxychalcone + 3 CO2 + 4 CoA. It participates in secondary metabolite biosynthesis; flavonoid biosynthesis. Functionally, the primary product of this enzyme is 4,2',4',6'-tetrahydroxychalcone (also termed naringenin-chalcone or chalcone) which can under specific conditions spontaneously isomerize into naringenin. The chain is Chalcone synthase 2 (CHS2) from Citrus sinensis (Sweet orange).